The chain runs to 811 residues: Glycerol-3-phosphate acyltransferase (811 aa).

The HXXXXD motif motif lies at 305-310 (CHRSHI).

Belongs to the GPAT/DAPAT family.

It localises to the cell inner membrane. It carries out the reaction sn-glycerol 3-phosphate + an acyl-CoA = a 1-acyl-sn-glycero-3-phosphate + CoA. Its pathway is phospholipid metabolism; CDP-diacylglycerol biosynthesis; CDP-diacylglycerol from sn-glycerol 3-phosphate: step 1/3. This is Glycerol-3-phosphate acyltransferase from Histophilus somni (strain 129Pt) (Haemophilus somnus).